A 424-amino-acid chain; its full sequence is Histidine--tRNA ligase (424 aa).

The protein belongs to the class-II aminoacyl-tRNA synthetase family. In terms of assembly, homodimer.

The protein localises to the cytoplasm. The enzyme catalyses tRNA(His) + L-histidine + ATP = L-histidyl-tRNA(His) + AMP + diphosphate + H(+). This is Histidine--tRNA ligase from Protochlamydia amoebophila (strain UWE25).